The sequence spans 409 residues: uncharacterized protein (409 aa).

It belongs to the mimivirus L17x/L18x family.

This is an uncharacterized protein from Acanthamoeba polyphaga mimivirus (APMV).